The chain runs to 226 residues: MRRATLCLLLLLAGPSWAGQMAISAMPGGAVIFKKVESIRERRFANLVEQKTDFSCGAAALATILRQAYWLDVDEEHVIKGMLVNADQDLVRTQGFSMLDMKRYLESIGMRARGYKIGPDTLLTVKIPVVVLVEIRGYKHFVVMQRAEKDWVYIGDPVLGNKRLSRDDFLAGWNGIVFAVLGEGYDKANALLDPPTPLTAKTKMNEFRPVGDAELMDFGFIQSDFF.

Residues 1–18 (MRRATLCLLLLLAGPSWA) form the signal peptide. In terms of domain architecture, Peptidase C39 spans 50 to 180 (QKTDFSCGAA…AGWNGIVFAV (131 aa)). The active site involves cysteine 56.

The protein belongs to the FapD family.

The protein localises to the periplasm. Probable cysteine protease that is involved in processing fibril precursors. Upon overexpression of the endogenous six-gene locus (fapA-fapF) in situ, cells form large clumps during liquid growth, make large amounts of biofilm and produce amyloid fibrils. Expression of the 6 gene operon in E.coli strain BL21(DE3) induces flocculation and biofilm formation with copious extracellular fibrils. The sequence is that of Probable functional amyloid protease FapD from Pseudomonas fluorescens.